Reading from the N-terminus, the 89-residue chain is Large ribosomal subunit protein eL31 (89 aa).

It belongs to the eukaryotic ribosomal protein eL31 family.

This chain is Large ribosomal subunit protein eL31 (rpl31e), found in Thermoplasma acidophilum (strain ATCC 25905 / DSM 1728 / JCM 9062 / NBRC 15155 / AMRC-C165).